The primary structure comprises 351 residues: Probable E3 ubiquitin-protein ligase sinah (351 aa).

The interval 1 to 38 is disordered; that stretch reads MSVRNSRPQLSWPERVSPQRTIDTPTASGEMLTRRQSA. Residues 18–27 show a composition bias toward polar residues; sequence PQRTIDTPTA. An RING-type zinc finger spans residues 106–141; that stretch reads CPVCFGYIMPPIMQCPRGHLICSTCRSKLTICPVCR. The segment at 155 to 346 is SBD; it reads VASKLIFPCK…LALNVVIRKV (192 aa). The segment at 158 to 218 adopts an SIAH-type zinc-finger fold; the sequence is KLIFPCKHSH…VYQHLMSSHE (61 aa). Cys-163, Cys-170, His-182, Cys-186, Cys-193, Cys-200, His-212, and His-217 together coordinate Zn(2+).

Belongs to the SINA (Seven in absentia) family. As to quaternary structure, interacts with ebi and phyl.

It carries out the reaction S-ubiquitinyl-[E2 ubiquitin-conjugating enzyme]-L-cysteine + [acceptor protein]-L-lysine = [E2 ubiquitin-conjugating enzyme]-L-cysteine + N(6)-ubiquitinyl-[acceptor protein]-L-lysine.. It participates in protein modification; protein ubiquitination. Functionally, E3 ubiquitin-protein ligase that mediates ubiquitination and subsequent proteasomal degradation of target proteins. The adapter phyl is required to direct the degradation of the two isoforms of the transcriptional repressor Tramtrack (Ttk). E3 ubiquitin ligases accept ubiquitin from an E2 ubiquitin-conjugating enzyme in the form of a thioester and then directly transfers the ubiquitin to targeted substrates. It probably triggers the ubiquitin-mediated degradation of different substrates. A phyl-independent mechanism of degradation exists for isoform beta of ttk that involves motifs in the C-terminus of ttk. In Drosophila melanogaster (Fruit fly), this protein is Probable E3 ubiquitin-protein ligase sinah (sinah).